A 275-amino-acid chain; its full sequence is Exosome complex component RRP40 (275 aa).

Alanine 2 carries the N-acetylalanine modification. A Glycyl lysine isopeptide (Lys-Gly) (interchain with G-Cter in SUMO2) cross-link involves residue lysine 151.

It belongs to the RRP40 family. Component of the RNA exosome core complex (Exo-9), composed of EXOSC1, EXOSC2, EXOSC3, EXOSC4, EXOSC5, EXOSC6, EXOSC7, EXOSC8 and EXOSC9; within the complex interacts with EXOSC5 and EXOSC9. The catalytically inactive RNA exosome core complex (Exo-9) associates with the catalytic subunit EXOSC10/RRP6. Exo-9 may associate with DIS3 to form the nucleolar exosome complex, or DIS3L to form the cytoplasmic exosome complex. Exo-9 is formed by a hexameric base ring consisting of the heterodimers EXOSC4-EXOSC9, EXOSC5-EXOSC8 and EXOSC6-EXOSC7, and a cap ring consisting of EXOSC1, EXOSC2 and EXOSC3. The RNA exosome complex associates with cofactors C1D/RRP47, MPHOSPH6/MPP6 and MTREX/MTR4. Interacts with MPHOSPH6/MPP6; the interaction is direct. Interacts with GTPBP1. Interacts with ZC3HAV1. Interacts with DDX17 only in the presence of ZC3HAV1 in an RNA-independent manner. Interacts with DHX36; this interaction occurs in a RNase-insensitive manner. Interacts with HBS1L isoform 2.

The protein resides in the cytoplasm. It is found in the nucleus. It localises to the nucleolus. Functionally, non-catalytic component of the RNA exosome complex which has 3'-&gt;5' exoribonuclease activity and participates in a multitude of cellular RNA processing and degradation events. In the nucleus, the RNA exosome complex is involved in proper maturation of stable RNA species such as rRNA, snRNA and snoRNA, in the elimination of RNA processing by-products and non-coding 'pervasive' transcripts, such as antisense RNA species and promoter-upstream transcripts (PROMPTs), and of mRNAs with processing defects, thereby limiting or excluding their export to the cytoplasm. The RNA exosome may be involved in Ig class switch recombination (CSR) and/or Ig variable region somatic hypermutation (SHM) by targeting AICDA deamination activity to transcribed dsDNA substrates. In the cytoplasm, the RNA exosome complex is involved in general mRNA turnover and specifically degrades inherently unstable mRNAs containing AU-rich elements (AREs) within their 3' untranslated regions, and in RNA surveillance pathways, preventing translation of aberrant mRNAs. It seems to be involved in degradation of histone mRNA. The catalytic inactive RNA exosome core complex of 9 subunits (Exo-9) is proposed to play a pivotal role in the binding and presentation of RNA for ribonucleolysis, and to serve as a scaffold for the association with catalytic subunits and accessory proteins or complexes. EXOSC3 as peripheral part of the Exo-9 complex stabilizes the hexameric ring of RNase PH-domain subunits through contacts with EXOSC9 and EXOSC5. This chain is Exosome complex component RRP40 (EXOSC3), found in Bos taurus (Bovine).